Reading from the N-terminus, the 873-residue chain is Alanine--tRNA ligase (873 aa).

Zn(2+)-binding residues include His562, His566, Cys666, and His670.

It belongs to the class-II aminoacyl-tRNA synthetase family. Requires Zn(2+) as cofactor.

The protein localises to the cytoplasm. It carries out the reaction tRNA(Ala) + L-alanine + ATP = L-alanyl-tRNA(Ala) + AMP + diphosphate. In terms of biological role, catalyzes the attachment of alanine to tRNA(Ala) in a two-step reaction: alanine is first activated by ATP to form Ala-AMP and then transferred to the acceptor end of tRNA(Ala). Also edits incorrectly charged Ser-tRNA(Ala) and Gly-tRNA(Ala) via its editing domain. This chain is Alanine--tRNA ligase, found in Dichelobacter nodosus (strain VCS1703A).